A 374-amino-acid chain; its full sequence is Tryptophan--tRNA ligase (374 aa).

A 'HIGH' region motif is present at residues 81–89; it reads PSGPVHIGH. Positions 258–262 match the 'KMSKS' region motif; it reads KMSAS.

This sequence belongs to the class-I aminoacyl-tRNA synthetase family.

It localises to the cytoplasm. The enzyme catalyses tRNA(Trp) + L-tryptophan + ATP = L-tryptophyl-tRNA(Trp) + AMP + diphosphate + H(+). In Pyrobaculum arsenaticum (strain DSM 13514 / JCM 11321 / PZ6), this protein is Tryptophan--tRNA ligase.